The following is a 181-amino-acid chain: ADP-ribosylation factor 1 (181 aa).

Gly-2 is lipidated: N-myristoyl glycine. GTP contacts are provided by residues 24–31 (GLDAAGKT), 67–71 (DVGGQ), and 126–129 (NKQD).

The protein belongs to the small GTPase superfamily. Arf family. As to expression, seedling shoots.

It is found in the golgi apparatus. The enzyme catalyses GTP + H2O = GDP + phosphate + H(+). Its function is as follows. GTP-binding protein involved in protein trafficking; may modulate vesicle budding and uncoating within the Golgi apparatus. This chain is ADP-ribosylation factor 1, found in Oryza sativa subsp. japonica (Rice).